The primary structure comprises 114 residues: U17-barytoxin-Tl1d (114 aa).

The N-terminal stretch at 1 to 20 (MKTIIVFLSLLVLATKFGDA) is a signal peptide. The propeptide occupies 21–74 (NEGVNQEQMKEVIQNEFREDFLNEMAPMSLLQQLEAIESTLLEKEADRNSRQKR). 3 cysteine pairs are disulfide-bonded: cysteine 75/cysteine 88, cysteine 82/cysteine 93, and cysteine 87/cysteine 108.

Belongs to the neurotoxin 14 (magi-1) family. 03 (ICK-30-40) subfamily. Expressed by the venom gland.

The protein resides in the secreted. Ion channel inhibitor. This Trittame loki (Brush-footed trapdoor spider) protein is U17-barytoxin-Tl1d.